A 388-amino-acid polypeptide reads, in one-letter code: Succinate--CoA ligase [ADP-forming] subunit beta (388 aa).

The ATP-grasp domain maps to 9-244 (KEIFRSMGVA…LEEEDPKEIE (236 aa)). Residues K46, 53 to 55 (GRG), E99, C102, and E107 each bind ATP. Positions 199 and 213 each coordinate Mg(2+). Residues N264 and 321-323 (GIM) each bind substrate.

This sequence belongs to the succinate/malate CoA ligase beta subunit family. As to quaternary structure, heterotetramer of two alpha and two beta subunits. It depends on Mg(2+) as a cofactor.

It catalyses the reaction succinate + ATP + CoA = succinyl-CoA + ADP + phosphate. The catalysed reaction is GTP + succinate + CoA = succinyl-CoA + GDP + phosphate. It functions in the pathway carbohydrate metabolism; tricarboxylic acid cycle; succinate from succinyl-CoA (ligase route): step 1/1. In terms of biological role, succinyl-CoA synthetase functions in the citric acid cycle (TCA), coupling the hydrolysis of succinyl-CoA to the synthesis of either ATP or GTP and thus represents the only step of substrate-level phosphorylation in the TCA. The beta subunit provides nucleotide specificity of the enzyme and binds the substrate succinate, while the binding sites for coenzyme A and phosphate are found in the alpha subunit. The sequence is that of Succinate--CoA ligase [ADP-forming] subunit beta from Staphylococcus aureus (strain Mu3 / ATCC 700698).